Consider the following 274-residue polypeptide: Ubiquinone biosynthesis O-methyltransferase, mitochondrial (274 aa).

The transit peptide at 1–30 directs the protein to the mitochondrion; the sequence is MNSMNILNKVKNVKSYTRLVRQGFLSQQRN. S-adenosyl-L-methionine-binding residues include Arg65, Gly88, Asp109, and Met154. 3 residues coordinate Mg(2+): Glu155, Glu158, and His159.

This sequence belongs to the class I-like SAM-binding methyltransferase superfamily. UbiG/COQ3 family. In terms of assembly, component of a multi-subunit COQ enzyme complex, composed of at least coq3, coq4, coq5, coq6, coq7 and coq9. Mg(2+) serves as cofactor.

It is found in the mitochondrion inner membrane. The enzyme catalyses 3,4-dihydroxy-5-(all-trans-decaprenyl)benzoate + S-adenosyl-L-methionine = 4-hydroxy-3-methoxy-5-(all-trans-decaprenyl)benzoate + S-adenosyl-L-homocysteine + H(+). The catalysed reaction is a 3-demethylubiquinone + S-adenosyl-L-methionine = a ubiquinone + S-adenosyl-L-homocysteine. It carries out the reaction 3-demethylubiquinol-10 + S-adenosyl-L-methionine = ubiquinol-10 + S-adenosyl-L-homocysteine + H(+). The protein operates within cofactor biosynthesis; ubiquinone biosynthesis. In terms of biological role, O-methyltransferase required for two non-consecutive steps during ubiquinone biosynthesis. Catalyzes the 2 O-methylation of 3,4-dihydroxy-5-(all-trans-decaprenyl)benzoic acid into 4-hydroxy-3-methoxy-5-(all-trans-decaprenyl)benzoic acid. Also catalyzes the last step of ubiquinone biosynthesis by mediating methylation of 3-demethylubiquinone into ubiquinone. Also able to mediate the methylation of 3-demethylubiquinol-10 into ubiquinol-10. This chain is Ubiquinone biosynthesis O-methyltransferase, mitochondrial, found in Schizosaccharomyces pombe (strain 972 / ATCC 24843) (Fission yeast).